Reading from the N-terminus, the 152-residue chain is Prostaglandin E synthase (152 aa).

Over 1–12 (MPAHSLAMSSPA) the chain is Lumenal. The helical transmembrane segment at 13 to 41 (LPAFLLCSTLLVIKMYVVAIITGQVRLRK) threads the bilayer. Residue Arg-38 coordinates glutathione. Residues 42–60 (KAFANPEDALRHGGPQYCR) are Cytoplasmic-facing. Residues 61–90 (SDPDVERCLRAHRNDMETIYPFLFLGFVYS) form a helical membrane-spanning segment. 73–77 (RNDME) contributes to the glutathione binding site. Residues 91–95 (FLGPN) are Lumenal-facing. A helical transmembrane segment spans residues 96–119 (PFVAWMHFLVFLLGRVVHTVAYLG). Positions 113 and 117 each coordinate glutathione. The Cytoplasmic segment spans residues 120–123 (KLRA). Residues 124–152 (PIRSVTYTLAQLPCASMALQILWEAARHL) traverse the membrane as a helical segment. 126-130 (RSVTY) is a glutathione binding site.

It belongs to the MAPEG family. As to quaternary structure, homotrimer. Glutathione serves as cofactor.

It is found in the membrane. The protein localises to the cytoplasm. It localises to the perinuclear region. It carries out the reaction prostaglandin H2 = prostaglandin E2. It catalyses the reaction 2-glyceryl-prostaglandin H2 = 2-glyceryl-prostaglandin E2. The catalysed reaction is prostaglandin G2 = (15S)-15-hydroperoxy-prostaglandin E2. The enzyme catalyses 1-chloro-2,4-dinitrobenzene + glutathione = 2,4-dinitrophenyl-S-glutathione + chloride + H(+). It carries out the reaction (5S)-hydroperoxy-(6E,8Z,11Z,14Z)-eicosatetraenoate + 2 glutathione = (5S)-hydroxy-(6E,8Z,11Z,14Z)-eicosatetraenoate + glutathione disulfide + H2O. The protein operates within lipid metabolism; prostaglandin biosynthesis. In terms of biological role, terminal enzyme of the cyclooxygenase (COX)-2-mediated prostaglandin E2 (PGE2) biosynthetic pathway. Catalyzes the glutathione-dependent oxidoreduction of prostaglandin endoperoxide H2 (PGH2) to prostaglandin E2 (PGE2) in response to inflammatory stimuli. Plays a key role in inflammation response, fever and pain. Also catalyzes the oxidoreduction of endocannabinoids into prostaglandin glycerol esters and PGG2 into 15-hydroperoxy-PGE2. In addition, displays low glutathione transferase and glutathione-dependent peroxidase activities, toward 1-chloro-2,4-dinitrobenzene and 5-hydroperoxyicosatetraenoic acid (5-HPETE), respectively. This is Prostaglandin E synthase (PTGES) from Macaca fascicularis (Crab-eating macaque).